The sequence spans 343 residues: Protein RecA (343 aa).

64-71 (GPESSGKT) provides a ligand contact to ATP.

It belongs to the RecA family.

The protein localises to the cytoplasm. Its function is as follows. Can catalyze the hydrolysis of ATP in the presence of single-stranded DNA, the ATP-dependent uptake of single-stranded DNA by duplex DNA, and the ATP-dependent hybridization of homologous single-stranded DNAs. It interacts with LexA causing its activation and leading to its autocatalytic cleavage. In Bacillus mycoides (strain KBAB4) (Bacillus weihenstephanensis), this protein is Protein RecA.